A 421-amino-acid polypeptide reads, in one-letter code: Gamma-glutamyl phosphate reductase (421 aa).

The protein belongs to the gamma-glutamyl phosphate reductase family.

It is found in the cytoplasm. The catalysed reaction is L-glutamate 5-semialdehyde + phosphate + NADP(+) = L-glutamyl 5-phosphate + NADPH + H(+). The protein operates within amino-acid biosynthesis; L-proline biosynthesis; L-glutamate 5-semialdehyde from L-glutamate: step 2/2. Catalyzes the NADPH-dependent reduction of L-glutamate 5-phosphate into L-glutamate 5-semialdehyde and phosphate. The product spontaneously undergoes cyclization to form 1-pyrroline-5-carboxylate. The polypeptide is Gamma-glutamyl phosphate reductase (Pseudomonas aeruginosa (strain ATCC 15692 / DSM 22644 / CIP 104116 / JCM 14847 / LMG 12228 / 1C / PRS 101 / PAO1)).